The chain runs to 778 residues: Beta-phellandrene synthase (neryl-diphosphate-cyclizing), chloroplastic (778 aa).

The transit peptide at 1 to 36 (MIVGYRSTIITLSHPKLGNGKTISSNAIFQRSCRVR) directs the protein to the chloroplast. 3 residues coordinate Mg(2+): Asp531, Asn676, and Glu684. A DDXXD motif motif is present at residues 531–535 (DDHFE).

It belongs to the terpene synthase family. Tpse subfamily. It depends on Mg(2+) as a cofactor. Trichomes.

The protein localises to the plastid. Its subcellular location is the chloroplast. It carries out the reaction neryl diphosphate = beta-phellandrene + diphosphate. Its function is as follows. Monoterpene synthase catalyzing the production of beta-phellandrene from neryl diphosphate. Also produces lower amounts of delta-2-carene, alpha-phellandrene and limonene. When incubated in vitro with geranyl diphosphate, catalyzes the formation of acyclic myrcene and ocimene as major products in addition to beta-phellandrene. This Solanum lycopersicum (Tomato) protein is Beta-phellandrene synthase (neryl-diphosphate-cyclizing), chloroplastic (PHS1).